The following is a 192-amino-acid chain: Type 1 phosphatases regulator YPI2 (192 aa).

Disordered stretches follow at residues 1-53 (MLQR…GKHK) and 65-192 (EFGQ…PVQK). Residues 8-18 (QTSSSTQTETT) are compositionally biased toward low complexity. Residues 25–49 (RRPETRQKEDSKVKWTEDVIDNEHM) are compositionally biased toward basic and acidic residues. Residues 69-79 (SSDESSDSSSD) show a composition bias toward low complexity. Basic and acidic residues predominate over residues 86–103 (YERNNDFDQNHRHSHNFD). Residues 134 to 148 (KGNTGMSKPSSSSPD) show a composition bias toward polar residues. Over residues 157-169 (IHKRNKKVRKPKR) the composition is skewed to basic residues.

The protein belongs to the YPI1 family.

It is found in the nucleus. Functionally, regulator of type 1 phosphatases which maintains protein phosphatase activity under strict control. The protein is Type 1 phosphatases regulator YPI2 (YPI2) of Scheffersomyces stipitis (strain ATCC 58785 / CBS 6054 / NBRC 10063 / NRRL Y-11545) (Yeast).